Consider the following 267-residue polypeptide: Translation initiation factor 2 subunit alpha (267 aa).

Residues 17-88 enclose the S1 motif domain; that stretch reads GEIVIGTVKR…KRGHIDLSIK (72 aa).

It belongs to the eIF-2-alpha family. Heterotrimer composed of an alpha, a beta and a gamma chain.

In terms of biological role, eIF-2 functions in the early steps of protein synthesis by forming a ternary complex with GTP and initiator tRNA. The protein is Translation initiation factor 2 subunit alpha (eif2a) of Archaeoglobus fulgidus (strain ATCC 49558 / DSM 4304 / JCM 9628 / NBRC 100126 / VC-16).